A 3902-amino-acid polypeptide reads, in one-letter code: Mediator of RNA polymerase II transcription subunit 12 (3902 aa).

Disordered regions lie at residues 414-576 (ESLT…EELP), 619-674 (FEPF…NPKL), 694-940 (AFDP…LEAL), 977-1029 (VVEK…PEPP), 1812-1831 (TSHK…TETR), 2463-2675 (TVEP…NRKQ), 2719-2771 (AGAS…SSSM), 2876-3151 (RIME…PEMQ), 3195-3549 (LQAG…SSNQ), and 3563-3902 (AGLN…QQQY). Over residues 420–430 (EPEEDPEEGPE) the composition is skewed to acidic residues. Residues 709–721 (PTPPEAPPPPPPV) show a composition bias toward pro residues. Basic and acidic residues-rich tracts occupy residues 740 to 802 (EDGK…EHLN), 912 to 928 (KAGD…KKPD), 977 to 1004 (VVEK…EKLP), and 1018 to 1027 (KTPEKPKTPE). Over residues 1812-1824 (TSHKTKDVKRKSA) the composition is skewed to basic residues. The segment at 2409–3902 (QTTRLDKVAK…MGQFPNQQQY (1494 aa)) is required for nuclear localization. Over residues 2474-2547 (AAVKKPEEET…VTAKDTEKDT (74 aa)) the composition is skewed to basic and acidic residues. Residues 2480–2526 (EEETAEKKKDEAKKADEKTTKADDEKKKDETADAKKDNEKQKEEKDK) are a coiled coil. Composition is skewed to low complexity over residues 2548 to 2566 (AAPT…AAPD), 2614 to 2632 (SRAN…SSTT), and 2734 to 2748 (PHPG…QHQG). Residues 2876 to 2979 (RIMEEQRILR…ERLERERVAR (104 aa)) are compositionally biased toward basic and acidic residues. Composition is skewed to low complexity over residues 2980–3001 (EALA…QAQQ), 3010–3143 (QQQR…QRNP), 3196–3205 (QAGQAAGQQQ), and 3226–3236 (PQQQQQQPQQP). Residues 3237–3248 (GTSQIPNTTPTR) show a composition bias toward polar residues. 3 stretches are compositionally biased toward low complexity: residues 3250-3275 (ANPM…GQPG), 3284-3295 (GQQQQNQFQRQG), and 3317-3389 (GQQQ…FGRQ). Positions 3391-3409 (APNQENFQQQPGFNQNAAG) are enriched in polar residues. Composition is skewed to low complexity over residues 3410–3446 (QNYQ…QQQN), 3454–3539 (QSQQ…QGNQ), and 3570–3619 (SSGN…RPGM). Over residues 3620–3649 (GQQGMGQQGMGQQGGMGQSGRGQPGMGGQS) the composition is skewed to gly residues. Low complexity-rich tracts occupy residues 3663 to 3700 (MGQP…QQQH), 3710 to 3742 (QQGR…QQAQ), and 3760 to 3830 (QQQQ…HRGQ). A compositionally biased stretch (gly residues) spans 3831–3841 (GQQGHGMGGAG). Over residues 3842 to 3888 (QQHQQVPQQQQNQYFQPQQQQDQRMQQQPGGQQQQQQGQSGQQQNNQ) the composition is skewed to low complexity. The segment covering 3889 to 3902 (HYNNMGQFPNQQQY) has biased composition (polar residues).

Belongs to the Mediator complex subunit 12 family. In terms of assembly, component of the Mediator complex.

Its subcellular location is the nucleus. Functionally, component of the Mediator complex, a coactivator involved in regulated gene transcription of nearly all RNA polymerase II-dependent genes. Mediator functions as a bridge to convey information from gene-specific regulatory proteins to the basal RNA polymerase II transcription machinery. Mediator is recruited to promoters by direct interactions with regulatory proteins and serves as a scaffold for the assembly of a functional preinitiation complex with RNA polymerase II and the general transcription factors. In Caenorhabditis briggsae, this protein is Mediator of RNA polymerase II transcription subunit 12 (dpy-22).